Consider the following 349-residue polypeptide: tRNA pseudouridine synthase D (349 aa).

Position 26 (phenylalanine 26) interacts with substrate. Aspartate 79 functions as the Nucleophile in the catalytic mechanism. Asparagine 128 serves as a coordination point for substrate. The TRUD domain occupies glycine 154–valine 303. Phenylalanine 329 contacts substrate.

The protein belongs to the pseudouridine synthase TruD family.

It catalyses the reaction uridine(13) in tRNA = pseudouridine(13) in tRNA. Its function is as follows. Responsible for synthesis of pseudouridine from uracil-13 in transfer RNAs. This chain is tRNA pseudouridine synthase D, found in Erwinia tasmaniensis (strain DSM 17950 / CFBP 7177 / CIP 109463 / NCPPB 4357 / Et1/99).